Reading from the N-terminus, the 322-residue chain is Phosphatidylserine decarboxylase proenzyme (322 aa).

Residues aspartate 90, histidine 147, and serine 254 each act as charge relay system; for autoendoproteolytic cleavage activity in the active site. Serine 254 (schiff-base intermediate with substrate; via pyruvic acid; for decarboxylase activity) is an active-site residue. Residue serine 254 is modified to Pyruvic acid (Ser); by autocatalysis. The segment at 296–322 (EPAPLPAEEIKAEHDASPLVDNKKDDT) is disordered. Basic and acidic residues predominate over residues 303–322 (EEIKAEHDASPLVDNKKDDT).

This sequence belongs to the phosphatidylserine decarboxylase family. PSD-B subfamily. Prokaryotic type I sub-subfamily. As to quaternary structure, heterodimer of a large membrane-associated beta subunit and a small pyruvoyl-containing alpha subunit. Requires pyruvate as cofactor. In terms of processing, is synthesized initially as an inactive proenzyme. Formation of the active enzyme involves a self-maturation process in which the active site pyruvoyl group is generated from an internal serine residue via an autocatalytic post-translational modification. Two non-identical subunits are generated from the proenzyme in this reaction, and the pyruvate is formed at the N-terminus of the alpha chain, which is derived from the carboxyl end of the proenzyme. The autoendoproteolytic cleavage occurs by a canonical serine protease mechanism, in which the side chain hydroxyl group of the serine supplies its oxygen atom to form the C-terminus of the beta chain, while the remainder of the serine residue undergoes an oxidative deamination to produce ammonia and the pyruvoyl prosthetic group on the alpha chain. During this reaction, the Ser that is part of the protease active site of the proenzyme becomes the pyruvoyl prosthetic group, which constitutes an essential element of the active site of the mature decarboxylase.

The protein localises to the cell membrane. It carries out the reaction a 1,2-diacyl-sn-glycero-3-phospho-L-serine + H(+) = a 1,2-diacyl-sn-glycero-3-phosphoethanolamine + CO2. The protein operates within phospholipid metabolism; phosphatidylethanolamine biosynthesis; phosphatidylethanolamine from CDP-diacylglycerol: step 2/2. Functionally, catalyzes the formation of phosphatidylethanolamine (PtdEtn) from phosphatidylserine (PtdSer). In Salmonella dublin (strain CT_02021853), this protein is Phosphatidylserine decarboxylase proenzyme.